An 845-amino-acid chain; its full sequence is ABC transporter A family member 9 (845 aa).

The next 7 membrane-spanning stretches (helical) occupy residues 33-53, 192-212, 235-255, 292-312, 318-338, 347-367, and 417-437; these read CVQI…NFWV, AFVA…FLGG, IASL…MPLF, IYFI…FAVF, FAMF…SFFL, AASI…SILS, and SKII…ALYL. The region spanning 531 to 762 is the ABC transporter domain; sequence VIIEGLTKHY…FGDGYSVRIN (232 aa). 565–572 is a binding site for ATP; sequence GANGAGKT.

This sequence belongs to the ABC transporter superfamily. ABCA family.

It localises to the membrane. The protein is ABC transporter A family member 9 (abcA9) of Dictyostelium discoideum (Social amoeba).